A 491-amino-acid polypeptide reads, in one-letter code: UDP-N-acetylmuramate--L-alanine ligase (491 aa).

Gly126–Thr132 serves as a coordination point for ATP.

The protein belongs to the MurCDEF family.

The protein localises to the cytoplasm. The enzyme catalyses UDP-N-acetyl-alpha-D-muramate + L-alanine + ATP = UDP-N-acetyl-alpha-D-muramoyl-L-alanine + ADP + phosphate + H(+). The protein operates within cell wall biogenesis; peptidoglycan biosynthesis. In terms of biological role, cell wall formation. In Escherichia coli (strain SE11), this protein is UDP-N-acetylmuramate--L-alanine ligase.